The primary structure comprises 310 residues: N-acetyl-gamma-glutamyl-phosphate reductase (310 aa).

Cys-117 is a catalytic residue.

This sequence belongs to the NAGSA dehydrogenase family. Type 2 subfamily.

Its subcellular location is the cytoplasm. It catalyses the reaction N-acetyl-L-glutamate 5-semialdehyde + phosphate + NADP(+) = N-acetyl-L-glutamyl 5-phosphate + NADPH + H(+). It participates in amino-acid biosynthesis; L-arginine biosynthesis; N(2)-acetyl-L-ornithine from L-glutamate: step 3/4. Functionally, catalyzes the NADPH-dependent reduction of N-acetyl-5-glutamyl phosphate to yield N-acetyl-L-glutamate 5-semialdehyde. The polypeptide is N-acetyl-gamma-glutamyl-phosphate reductase (Brucella ovis (strain ATCC 25840 / 63/290 / NCTC 10512)).